Here is a 32-residue protein sequence, read N- to C-terminus: Alpha-amylase inhibitor AAI (32 aa).

3 disulfides stabilise this stretch: C1–C18, C8–C23, and C17–C31.

Endosperm.

In terms of biological role, alpha-amylase inhibitor. It is active against alpha-amylases from Tribolium castaneum and Prostephanus truncatus larvae. This is Alpha-amylase inhibitor AAI (AAI) from Amaranthus hypochondriacus (Prince-of-Wales feather).